The sequence spans 136 residues: Nucleoside diphosphate kinase (136 aa).

Residues lysine 10, phenylalanine 58, arginine 86, threonine 92, arginine 104, and asparagine 114 each contribute to the ATP site. The Pros-phosphohistidine intermediate role is filled by histidine 117.

Belongs to the NDK family. In terms of assembly, homotetramer. The cofactor is Mg(2+).

The protein resides in the cytoplasm. The catalysed reaction is a 2'-deoxyribonucleoside 5'-diphosphate + ATP = a 2'-deoxyribonucleoside 5'-triphosphate + ADP. It carries out the reaction a ribonucleoside 5'-diphosphate + ATP = a ribonucleoside 5'-triphosphate + ADP. In terms of biological role, major role in the synthesis of nucleoside triphosphates other than ATP. The ATP gamma phosphate is transferred to the NDP beta phosphate via a ping-pong mechanism, using a phosphorylated active-site intermediate. The chain is Nucleoside diphosphate kinase from Mycolicibacterium paratuberculosis (strain ATCC BAA-968 / K-10) (Mycobacterium paratuberculosis).